A 118-amino-acid chain; its full sequence is Large ribosomal subunit protein uL18 (118 aa).

This sequence belongs to the universal ribosomal protein uL18 family. As to quaternary structure, part of the 50S ribosomal subunit; part of the 5S rRNA/L5/L18/L25 subcomplex. Contacts the 5S and 23S rRNAs.

In terms of biological role, this is one of the proteins that bind and probably mediate the attachment of the 5S RNA into the large ribosomal subunit, where it forms part of the central protuberance. The sequence is that of Large ribosomal subunit protein uL18 from Campylobacter concisus (strain 13826).